Reading from the N-terminus, the 274-residue chain is Acyl-[acyl-carrier-protein]--UDP-N-acetylglucosamine O-acyltransferase (274 aa).

Belongs to the transferase hexapeptide repeat family. LpxA subfamily. Homotrimer.

It is found in the cytoplasm. The enzyme catalyses a (3R)-hydroxyacyl-[ACP] + UDP-N-acetyl-alpha-D-glucosamine = a UDP-3-O-[(3R)-3-hydroxyacyl]-N-acetyl-alpha-D-glucosamine + holo-[ACP]. It functions in the pathway glycolipid biosynthesis; lipid IV(A) biosynthesis; lipid IV(A) from (3R)-3-hydroxytetradecanoyl-[acyl-carrier-protein] and UDP-N-acetyl-alpha-D-glucosamine: step 1/6. Functionally, involved in the biosynthesis of lipid A, a phosphorylated glycolipid that anchors the lipopolysaccharide to the outer membrane of the cell. The polypeptide is Acyl-[acyl-carrier-protein]--UDP-N-acetylglucosamine O-acyltransferase (Bartonella quintana (strain Toulouse) (Rochalimaea quintana)).